A 185-amino-acid chain; its full sequence is Celestoxin (185 aa).

The N-terminal stretch at 1–20 is a signal peptide; it reads MKFIAAVLLVALLCPKDSTS. Residues 21-148 constitute a propeptide that is removed on maturation; the sequence is LASRLSGLLG…GLPVALPVSV (128 aa).

In terms of tissue distribution, expressed by the mandibular venom gland.

The protein localises to the secreted. Has a hypotensive activity. The chain is Celestoxin from Caribicus warreni (Haitian giant galliwasp).